Consider the following 489-residue polypeptide: Betaine aldehyde dehydrogenase (489 aa).

Residues T26 and D93 each contribute to the K(+) site. 150–152 provides a ligand contact to NAD(+); the sequence is GAW. The Charge relay system role is filled by K162. Residue 176-179 participates in NAD(+) binding; it reads KPSE. K(+) is bound at residue V180. NAD(+) is bound at residue 229–232; sequence GVET. L245 provides a ligand contact to K(+). The active-site Proton acceptor is E251. NAD(+) contacts are provided by G253, C285, and E386. C285 (nucleophile) is an active-site residue. C285 is modified (cysteine sulfenic acid (-SOH)). K456 and G459 together coordinate K(+). The active-site Charge relay system is E463.

It belongs to the aldehyde dehydrogenase family. Dimer of dimers. The cofactor is K(+).

It carries out the reaction betaine aldehyde + NAD(+) + H2O = glycine betaine + NADH + 2 H(+). It participates in amine and polyamine biosynthesis; betaine biosynthesis via choline pathway; betaine from betaine aldehyde: step 1/1. Involved in the biosynthesis of the osmoprotectant glycine betaine. Catalyzes the irreversible oxidation of betaine aldehyde to the corresponding acid. The sequence is that of Betaine aldehyde dehydrogenase from Burkholderia mallei (strain SAVP1).